Reading from the N-terminus, the 285-residue chain is Putative pyruvate, phosphate dikinase regulatory protein (285 aa).

165–172 contributes to the ADP binding site; it reads GVSRTSKT.

This sequence belongs to the pyruvate, phosphate/water dikinase regulatory protein family. PDRP subfamily.

It catalyses the reaction N(tele)-phospho-L-histidyl/L-threonyl-[pyruvate, phosphate dikinase] + ADP = N(tele)-phospho-L-histidyl/O-phospho-L-threonyl-[pyruvate, phosphate dikinase] + AMP + H(+). It carries out the reaction N(tele)-phospho-L-histidyl/O-phospho-L-threonyl-[pyruvate, phosphate dikinase] + phosphate + H(+) = N(tele)-phospho-L-histidyl/L-threonyl-[pyruvate, phosphate dikinase] + diphosphate. In terms of biological role, bifunctional serine/threonine kinase and phosphorylase involved in the regulation of the pyruvate, phosphate dikinase (PPDK) by catalyzing its phosphorylation/dephosphorylation. This is Putative pyruvate, phosphate dikinase regulatory protein from Lactobacillus delbrueckii subsp. bulgaricus (strain ATCC BAA-365 / Lb-18).